A 299-amino-acid polypeptide reads, in one-letter code: Ent-kaurene oxidase-like protein 1 (299 aa).

The helical transmembrane segment at 16–36 threads the bilayer; the sequence is AVVGVFVAAAVVGGFVAAVAL.

The protein belongs to the cytochrome P450 family. As to expression, expressed in roots and panicles.

It is found in the membrane. In Oryza sativa subsp. japonica (Rice), this protein is Ent-kaurene oxidase-like protein 1.